We begin with the raw amino-acid sequence, 301 residues long: MWFKNLKLYHLTQTLDLTEEDIQDKLAEFPFRPCGSQELATMGWTSPVGQGDMLVHSAGGKFWLTLKKQERILPAAVVNAELADKVALMEAETGSNVGKKAQQEMKEEIIQRLLPQAFTKNSFSHGFISTQDNLVVVDASADGKAETFLAMLRKAIGSLPVVPLAKQSVQEELTHWLTDDSVPNDVVILEEAELRSMEEDGAIVRCKNQDLGSEEIANHLSAGKTVQKIAIEWDETFSALLQEDMAVKRLKFTDVMTEQNDDIPKEDKLAKMDADFALMSAEIVRFSKRLVEIFNLQQDQE.

It belongs to the RdgC family.

It is found in the cytoplasm. Its subcellular location is the nucleoid. In terms of biological role, may be involved in recombination. The polypeptide is Recombination-associated protein RdgC (Pseudoalteromonas atlantica (strain T6c / ATCC BAA-1087)).